The chain runs to 142 residues: Holo-[acyl-carrier-protein] synthase (142 aa).

Mg(2+)-binding residues include Asp-8 and Glu-57.

This sequence belongs to the P-Pant transferase superfamily. AcpS family. Mg(2+) is required as a cofactor.

It localises to the cytoplasm. It catalyses the reaction apo-[ACP] + CoA = holo-[ACP] + adenosine 3',5'-bisphosphate + H(+). Transfers the 4'-phosphopantetheine moiety from coenzyme A to a Ser of acyl-carrier-protein. In Maricaulis maris (strain MCS10) (Caulobacter maris), this protein is Holo-[acyl-carrier-protein] synthase.